The chain runs to 354 residues: Heme A synthase (354 aa).

The next 8 membrane-spanning stretches (helical) occupy residues 21 to 41 (VAVW…LGGL), 106 to 126 (VWGR…ALSG), 139 to 159 (VFLL…SGLV), 171 to 191 (AHLA…LDIL), 212 to 232 (MLGL…VAGL), 268 to 288 (VQFG…VGWF), 304 to 324 (AVGL…VMVV), and 326 to 346 (VWLA…CLWA). Histidine 272 contacts heme. Histidine 332 contacts heme.

Belongs to the COX15/CtaA family. Type 2 subfamily. Interacts with CtaB. Heme b serves as cofactor.

Its subcellular location is the cell membrane. The catalysed reaction is Fe(II)-heme o + 2 A + H2O = Fe(II)-heme a + 2 AH2. The protein operates within porphyrin-containing compound metabolism; heme A biosynthesis; heme A from heme O: step 1/1. Catalyzes the conversion of heme O to heme A by two successive hydroxylations of the methyl group at C8. The first hydroxylation forms heme I, the second hydroxylation results in an unstable dihydroxymethyl group, which spontaneously dehydrates, resulting in the formyl group of heme A. The protein is Heme A synthase of Paramagnetospirillum magneticum (strain ATCC 700264 / AMB-1) (Magnetospirillum magneticum).